A 432-amino-acid polypeptide reads, in one-letter code: Adenylosuccinate synthetase (432 aa).

GTP contacts are provided by residues 13-19 (GDEGKGK) and 41-43 (GHT). Asp-14 (proton acceptor) is an active-site residue. Residues Asp-14 and Gly-41 each contribute to the Mg(2+) site. IMP contacts are provided by residues 14–17 (DEGK), 39–42 (NAGH), Thr-130, Arg-144, Gln-225, Thr-240, and Arg-304. Residue His-42 is the Proton donor of the active site. 300–306 (ATTGRSR) contributes to the substrate binding site. GTP-binding positions include Arg-306, 332–334 (KLD), and 415–417 (STG).

This sequence belongs to the adenylosuccinate synthetase family. Homodimer. Requires Mg(2+) as cofactor.

The protein resides in the cytoplasm. It carries out the reaction IMP + L-aspartate + GTP = N(6)-(1,2-dicarboxyethyl)-AMP + GDP + phosphate + 2 H(+). Its pathway is purine metabolism; AMP biosynthesis via de novo pathway; AMP from IMP: step 1/2. Functionally, plays an important role in the de novo pathway of purine nucleotide biosynthesis. Catalyzes the first committed step in the biosynthesis of AMP from IMP. This Yersinia pseudotuberculosis serotype O:1b (strain IP 31758) protein is Adenylosuccinate synthetase.